Reading from the N-terminus, the 449-residue chain is N-succinylarginine dihydrolase (449 aa).

Residues 19 to 28, Asn110, and 137 to 138 each bind substrate; these read GGLSYGNVAS and HR. Residues 23–43 are disordered; the sequence is YGNVASQSNSQQASNPREAAR. A compositionally biased stretch (low complexity) spans 27–37; the sequence is ASQSNSQQASN. Residue Glu174 is part of the active site. Residue Arg214 coordinates substrate. Residue His250 is part of the active site. Residues Asp252 and Asn365 each contribute to the substrate site. Cys371 serves as the catalytic Nucleophile.

It belongs to the succinylarginine dihydrolase family. As to quaternary structure, homodimer.

It carries out the reaction N(2)-succinyl-L-arginine + 2 H2O + 2 H(+) = N(2)-succinyl-L-ornithine + 2 NH4(+) + CO2. It participates in amino-acid degradation; L-arginine degradation via AST pathway; L-glutamate and succinate from L-arginine: step 2/5. In terms of biological role, catalyzes the hydrolysis of N(2)-succinylarginine into N(2)-succinylornithine, ammonia and CO(2). In Pseudomonas putida (strain ATCC 700007 / DSM 6899 / JCM 31910 / BCRC 17059 / LMG 24140 / F1), this protein is N-succinylarginine dihydrolase.